The following is a 578-amino-acid chain: MPDSNFAERSEEQVSGAKVIAQALKTQDVEYIFGIVGIPVTEIAIAAQQLGIKYIGMRNEQAACYAASAIGYLTSRPGVCLVVSGPGLIHALGGMANANMNCWPLLVIGGSSERNQETMGAFQEFPQVEACRLYTKFSARPSSIEAIPFVIEKAVRSSIYGRPGACYVDIPADFVNLQVNVNSIKYMERCMSPPISMAETSAVCTAASVIRNAKQPLLIIGKGAAYAHAEESIKKLVEQYKLPFLPTPMGKGVVPDNHPYCVGAARSRALQFADVIVLFGARLNWILHFGLPPRYQPDVKFIQVDICAEELGNNVKPAVTLLGNIHAVTKQLLEELDKTPWQYPPESKWWKTLREKMKSNEAASKELASKKSLPMNYYTVFYHVQEQLPRDCFVVSEGANTMDIGRTVLQNYLPRHRLDAGTFGTMGVGLGFAIAAAVVAKDRSPGQWIICVEGDSAFGFSGMEVETICRYNLPIILLVVNNNGIYQGFDTDTWKEMLKFQDATAVVPPMCLLPNSHYEQVMTAFGGKGYFVQTPEELQKSLRQSLADTTKPSLINIMIEPQATRKAQDFHWLTRSNM.

The residue at position 4 (Ser4) is a Phosphoserine. Glu60 contributes to the thiamine diphosphate binding site. N6-succinyllysine occurs at positions 351, 358, and 365. Positions 401–486 (TMDIGRTVLQ…LLVVNNNGIY (86 aa)) are thiamine pyrophosphate binding. 2 residues coordinate Mg(2+): Asp455 and Asn482. Residues 576-578 (SNM) carry the Microbody targeting signal motif.

The protein belongs to the TPP enzyme family. As to quaternary structure, homotetramer. The cofactor is Mg(2+). Requires thiamine diphosphate as cofactor. As to expression, widely expressed.

The protein resides in the peroxisome. The catalysed reaction is a 2-hydroxy-3-methyl fatty acyl-CoA = a 2-methyl-branched fatty aldehyde + formyl-CoA. It catalyses the reaction an (R)-2-hydroxy-long-chain-fatty acyl-CoA = a long-chain fatty aldehyde + formyl-CoA. It carries out the reaction 2-hydroxy-3-methylhexadecanoyl-CoA = 2-methylpentadecanal + formyl-CoA. The enzyme catalyses 2-hydroxyoctadecanoyl-CoA = heptadecanal + formyl-CoA. The catalysed reaction is 2-hydroxyphytanoyl-CoA = 2,6,10,14-tetramethylpentadecanal + formyl-CoA. Its pathway is lipid metabolism; fatty acid metabolism. Its function is as follows. Peroxisomal 2-OH acyl-CoA lyase involved in the cleavage (C1 removal) reaction in the fatty acid alpha-oxydation in a thiamine pyrophosphate (TPP)-dependent manner. Involved in the degradation of 3-methyl-branched fatty acids like phytanic acid and the shortening of 2-hydroxy long-chain fatty acids. Plays a significant role in the biosynthesis of heptadecanal in the liver. The sequence is that of 2-hydroxyacyl-CoA lyase 1 from Homo sapiens (Human).